An 837-amino-acid polypeptide reads, in one-letter code: Protein kintoun (837 aa).

Disordered stretches follow at residues 100–119, 205–224, 230–249, and 363–515; these read APSS…GSHW, LPGV…LPDF, YPAA…LQPA, and AAAP…GPGT. The segment covering 233 to 242 has biased composition (pro residues); it reads APGPRAPSPP. Over residues 428-442 the composition is skewed to basic and acidic residues; sequence GEERVPKPGEQDLSR. Positions 445-459 are enriched in low complexity; that stretch reads GSPPGSVEEPSPGGE. 2 positions are modified to phosphoserine: Ser-461 and Ser-467. A compositionally biased stretch (basic and acidic residues) spans 484 to 498; sequence ESARGDSSVETREES. Residues Ser-640, Ser-641, and Ser-773 each carry the phosphoserine modification.

The protein belongs to the PIH1 family. Kintoun subfamily. As to quaternary structure, interacts with CFAP300. Interacts with DNAAF4. Interacts with DNAAF6/PIH1D3. Interacts with DNAI2 and HSPA1A.

The protein resides in the cytoplasm. Its subcellular location is the dynein axonemal particle. Functionally, required for cytoplasmic pre-assembly of axonemal dyneins, thereby playing a central role in motility in cilia and flagella. Involved in pre-assembly of dynein arm complexes in the cytoplasm before intraflagellar transport loads them for the ciliary compartment. In Homo sapiens (Human), this protein is Protein kintoun.